A 432-amino-acid polypeptide reads, in one-letter code: Gamma-glutamyl phosphate reductase (432 aa).

Belongs to the gamma-glutamyl phosphate reductase family.

It localises to the cytoplasm. The enzyme catalyses L-glutamate 5-semialdehyde + phosphate + NADP(+) = L-glutamyl 5-phosphate + NADPH + H(+). It functions in the pathway amino-acid biosynthesis; L-proline biosynthesis; L-glutamate 5-semialdehyde from L-glutamate: step 2/2. In terms of biological role, catalyzes the NADPH-dependent reduction of L-glutamate 5-phosphate into L-glutamate 5-semialdehyde and phosphate. The product spontaneously undergoes cyclization to form 1-pyrroline-5-carboxylate. In Corynebacterium glutamicum (strain R), this protein is Gamma-glutamyl phosphate reductase.